A 104-amino-acid polypeptide reads, in one-letter code: Small integral membrane protein 19 (104 aa).

The helical transmembrane segment at 20–42 (AWNEATNVYLLVILVSFALLMYA) threads the bilayer.

Belongs to the SMIM19 family.

Its subcellular location is the membrane. The polypeptide is Small integral membrane protein 19 (smim19) (Danio rerio (Zebrafish)).